We begin with the raw amino-acid sequence, 911 residues long: Valine--tRNA ligase (911 aa).

The 'HIGH' region motif lies at 57-67 (PTVSGSLHVGH). The 'KMSKS' region motif lies at 599–603 (KMSKS). Lysine 602 is an ATP binding site. Residues 882 to 911 (EESAAEGTPETEVAVEASELGEPPAKKPKH) form a disordered region.

This sequence belongs to the class-I aminoacyl-tRNA synthetase family. ValS type 2 subfamily. As to quaternary structure, monomer.

The protein localises to the cytoplasm. It carries out the reaction tRNA(Val) + L-valine + ATP = L-valyl-tRNA(Val) + AMP + diphosphate. Its function is as follows. Catalyzes the attachment of valine to tRNA(Val). As ValRS can inadvertently accommodate and process structurally similar amino acids such as threonine, to avoid such errors, it has a 'posttransfer' editing activity that hydrolyzes mischarged Thr-tRNA(Val) in a tRNA-dependent manner. This is Valine--tRNA ligase from Bifidobacterium longum (strain NCC 2705).